Reading from the N-terminus, the 394-residue chain is Candidapepsin (394 aa).

Positions 1–23 (MATIFLFTKNVFIALAFALFAQG) are cleaved as a signal peptide. Positions 24–60 (LTIPDGIEKRTDKVVSLDFTVIRKPFNATAHRLIQKR) are cleaved as a propeptide — activation peptide. Asparagine 50 carries N-linked (GlcNAc...) asparagine glycosylation. In terms of domain architecture, Peptidase A1 spans 74 to 381 (YAADIVVGSN…DLDDKTISLA (308 aa)). Residue aspartate 92 is part of the active site. Residues cysteine 107 and cysteine 119 are joined by a disulfide bond. Aspartate 278 is a catalytic residue. Cysteine 314 and cysteine 347 are oxidised to a cystine.

It belongs to the peptidase A1 family. O-glycosylated.

The protein localises to the secreted. It carries out the reaction Preferential cleavage at the carboxyl of hydrophobic amino acids, but fails to cleave 15-Leu-|-Tyr-16, 16-Tyr-|-Leu-17 and 24-Phe-|-Phe-25 of insulin B chain. Activates trypsinogen, and degrades keratin.. The chain is Candidapepsin (SAPT1) from Candida tropicalis (Yeast).